We begin with the raw amino-acid sequence, 346 residues long: Elongation factor Ts (346 aa).

Positions 80-83 (TDFV) are involved in Mg(2+) ion dislocation from EF-Tu.

It belongs to the EF-Ts family.

The protein resides in the cytoplasm. Functionally, associates with the EF-Tu.GDP complex and induces the exchange of GDP to GTP. It remains bound to the aminoacyl-tRNA.EF-Tu.GTP complex up to the GTP hydrolysis stage on the ribosome. The sequence is that of Elongation factor Ts from Streptococcus suis (strain 98HAH33).